The sequence spans 807 residues: Maternal DNA replication licensing factor mcm3 (807 aa).

Residues 295 to 502 (IFEHLSKSLA…NDQEIADHVL (208 aa)) enclose the MCM domain. Residue 345-352 (GDPSVAKS) coordinates ATP. The Arginine finger motif lies at 477-480 (SRFD). Residues 664–673 (KTDKDLHDEN) are compositionally biased toward basic and acidic residues. Residues 664 to 741 (KTDKDLHDEN…QDGKRSLSQN (78 aa)) are disordered. Polar residues predominate over residues 707–723 (FSEQDSSLNENLSQSLR). Positions 727–741 (KKAESQDGKRSLSQN) are enriched in basic and acidic residues.

Belongs to the MCM family. Component of the mcm2-7 complex (RLF-M). The complex forms a toroidal hexameric ring with the proposed subunit order mcm2-mcm6-mcm4-mcm7-mcm3-mcm5. The heterodimer of mmcm3/mcm5 interacts with mcm4, mmcm6, mcm7 and weakly with mcm2. Interacts with mcm7, though this interaction may not be direct, and remains in a complex with mcm7 throughout the cell cycle. Component of the CMG helicase complex, composed of the mcm2-7 complex, the GINS complex and cdc45.

The protein localises to the nucleus. Its subcellular location is the chromosome. It carries out the reaction ATP + H2O = ADP + phosphate + H(+). Acts as a component of the mcm2-7 complex (mcm complex) which is the putative replicative helicase essential for 'once per cell cycle' DNA replication initiation and elongation in eukaryotic cells. The active ATPase sites in the mcm2-7 ring are formed through the interaction surfaces of two neighboring subunits such that a critical structure of a conserved arginine finger motif is provided in trans relative to the ATP-binding site of the Walker A box of the adjacent subunit. The six ATPase active sites, however, are likely to contribute differentially to the complex helicase activity. The existence of maternal and zygotic forms of mcm3 and mcm6 suggests that specific forms of mcm2-7 complexes may be used during different stages of development. This Xenopus laevis (African clawed frog) protein is Maternal DNA replication licensing factor mcm3 (mmcm3).